The primary structure comprises 209 residues: Mitochondrial import inner membrane translocase subunit Tim23 (209 aa).

The next 3 helical transmembrane spans lie at 73–93 (FELA…FGAM), 125–145 (ALWA…GVII), and 181–197 (GLTG…YNNW).

The protein belongs to the Tim17/Tim22/Tim23 family. As to quaternary structure, component of the TIM23 complex at least composed of TIMM23, TIMM17 (TIMM17A or TIMM17B) and TIMM50; within this complex, directly interacts with TIMM50. The complex interacts with the TIMM44 component of the PAM complex and with DNAJC15. Upon mitochondrial depolarization, interacts with PINK1; the interaction is required for PINK1 accumulation at the outer mitochondrial membrane, kinase activation by autophosphorylation and PRKN recruitement to mitochondria.

It is found in the mitochondrion inner membrane. Essential component of the TIM23 complex, a complex that mediates the translocation of transit peptide-containing proteins across the mitochondrial inner membrane. Has a role in the activation of stress-induced mitophagy by protecting PINK1 from OMA1-mediated degradation and facilitating its accumulation at the outer mitochondrial membrane in response to depolarization. The chain is Mitochondrial import inner membrane translocase subunit Tim23 (TIMM23) from Homo sapiens (Human).